The chain runs to 487 residues: Glutamate--tRNA ligase (487 aa).

Residues 13–23 carry the 'HIGH' region motif; the sequence is PSPTGLFHIGG. Residues 255–259 carry the 'KMSKS' region motif; that stretch reads KLSKR. ATP is bound at residue K258.

The protein belongs to the class-I aminoacyl-tRNA synthetase family. Glutamate--tRNA ligase type 1 subfamily. As to quaternary structure, monomer.

It is found in the cytoplasm. The enzyme catalyses tRNA(Glu) + L-glutamate + ATP = L-glutamyl-tRNA(Glu) + AMP + diphosphate. In terms of biological role, catalyzes the attachment of glutamate to tRNA(Glu) in a two-step reaction: glutamate is first activated by ATP to form Glu-AMP and then transferred to the acceptor end of tRNA(Glu). This chain is Glutamate--tRNA ligase, found in Malacoplasma penetrans (strain HF-2) (Mycoplasma penetrans).